Here is a 396-residue protein sequence, read N- to C-terminus: Argininosuccinate synthase (396 aa).

9–17 (AYSGGLDTS) contacts ATP. Tyrosine 85 provides a ligand contact to L-citrulline. Position 115 (glycine 115) interacts with ATP. Residues threonine 117, asparagine 121, and aspartate 122 each coordinate L-aspartate. Asparagine 121 is an L-citrulline binding site. L-citrulline contacts are provided by arginine 125, serine 173, glutamate 258, and tyrosine 270.

It belongs to the argininosuccinate synthase family. Type 1 subfamily. Homotetramer.

It localises to the cytoplasm. It catalyses the reaction L-citrulline + L-aspartate + ATP = 2-(N(omega)-L-arginino)succinate + AMP + diphosphate + H(+). The protein operates within amino-acid biosynthesis; L-arginine biosynthesis; L-arginine from L-ornithine and carbamoyl phosphate: step 2/3. The protein is Argininosuccinate synthase of Streptococcus agalactiae serotype Ia (strain ATCC 27591 / A909 / CDC SS700).